Consider the following 75-residue polypeptide: MKTFFKDMAERAIKTFAQAMIGALGAGATGLIGVDWLQALSIAGFATVVSILTSLASGIPGDNTASLVNNKKEGE.

The next 2 helical transmembrane spans lie at 16 to 36 (FAQAMIGALGAGATGLIGVDW) and 39 to 59 (ALSIAGFATVVSILTSLASGI).

Homomultimer.

The protein resides in the host cell inner membrane. In terms of biological role, accumulates harmlessly in the cytoplasmic membrane until it reaches a critical concentration that triggers the formation of micron-scale pores (holes) causing host cell membrane disruption and endolysin escape into the periplasmic space. Determines the precise timing of host cell lysis. Participates with the endolysin protein in the sequential events which lead to the programmed host cell lysis releasing the mature viral particles from the host cell. The chain is Holin from Lactococcus lactis subsp. cremoris (Streptococcus cremoris).